Here is a 163-residue protein sequence, read N- to C-terminus: NADH-quinone oxidoreductase subunit I (163 aa).

2 consecutive 4Fe-4S ferredoxin-type domains span residues 53–83 and 94–123; these read LRRY…IEAG and VRYD…EGPN. Residues cysteine 63, cysteine 66, cysteine 69, cysteine 73, cysteine 103, cysteine 106, cysteine 109, and cysteine 113 each coordinate [4Fe-4S] cluster.

This sequence belongs to the complex I 23 kDa subunit family. As to quaternary structure, NDH-1 is composed of 14 different subunits. Subunits NuoA, H, J, K, L, M, N constitute the membrane sector of the complex. [4Fe-4S] cluster is required as a cofactor.

Its subcellular location is the cell inner membrane. The catalysed reaction is a quinone + NADH + 5 H(+)(in) = a quinol + NAD(+) + 4 H(+)(out). NDH-1 shuttles electrons from NADH, via FMN and iron-sulfur (Fe-S) centers, to quinones in the respiratory chain. The immediate electron acceptor for the enzyme in this species is believed to be ubiquinone. Couples the redox reaction to proton translocation (for every two electrons transferred, four hydrogen ions are translocated across the cytoplasmic membrane), and thus conserves the redox energy in a proton gradient. This Bartonella quintana (strain Toulouse) (Rochalimaea quintana) protein is NADH-quinone oxidoreductase subunit I.